A 331-amino-acid chain; its full sequence is Anthranilate phosphoribosyltransferase (331 aa).

5-phospho-alpha-D-ribose 1-diphosphate is bound by residues Gly-78, 81–82 (GD), Thr-86, 88–91 (NVST), 106–114 (KHGNYSVSS), and Ser-118. Gly-78 contacts anthranilate. Position 90 (Ser-90) interacts with Mg(2+). Asn-109 is an anthranilate binding site. Arg-164 is a binding site for anthranilate. Residues Asp-222 and Glu-223 each coordinate Mg(2+).

The protein belongs to the anthranilate phosphoribosyltransferase family. Homodimer. Mg(2+) serves as cofactor.

It catalyses the reaction N-(5-phospho-beta-D-ribosyl)anthranilate + diphosphate = 5-phospho-alpha-D-ribose 1-diphosphate + anthranilate. Its pathway is amino-acid biosynthesis; L-tryptophan biosynthesis; L-tryptophan from chorismate: step 2/5. Functionally, catalyzes the transfer of the phosphoribosyl group of 5-phosphorylribose-1-pyrophosphate (PRPP) to anthranilate to yield N-(5'-phosphoribosyl)-anthranilate (PRA). This is Anthranilate phosphoribosyltransferase from Haloarcula marismortui (strain ATCC 43049 / DSM 3752 / JCM 8966 / VKM B-1809) (Halobacterium marismortui).